Reading from the N-terminus, the 589-residue chain is UvrABC system protein C (589 aa).

Positions 10–87 (ESSGVYLMKK…IKKYSPKYNI (78 aa)) constitute a GIY-YIG domain. The UVR domain maps to 197–232 (SKLINELTALMNKASQDMDFEKSIIYREQIKELKSI).

This sequence belongs to the UvrC family. Interacts with UvrB in an incision complex.

It localises to the cytoplasm. In terms of biological role, the UvrABC repair system catalyzes the recognition and processing of DNA lesions. UvrC both incises the 5' and 3' sides of the lesion. The N-terminal half is responsible for the 3' incision and the C-terminal half is responsible for the 5' incision. The sequence is that of UvrABC system protein C from Fusobacterium nucleatum subsp. nucleatum (strain ATCC 25586 / DSM 15643 / BCRC 10681 / CIP 101130 / JCM 8532 / KCTC 2640 / LMG 13131 / VPI 4355).